The sequence spans 432 residues: D-amino acid dehydrogenase (432 aa).

Residue 3–17 (VVILGSGVVGVTSAW) coordinates FAD.

It belongs to the DadA oxidoreductase family. The cofactor is FAD.

It carries out the reaction a D-alpha-amino acid + A + H2O = a 2-oxocarboxylate + AH2 + NH4(+). Its pathway is amino-acid degradation; D-alanine degradation; NH(3) and pyruvate from D-alanine: step 1/1. Functionally, oxidative deamination of D-amino acids. The polypeptide is D-amino acid dehydrogenase (Escherichia fergusonii (strain ATCC 35469 / DSM 13698 / CCUG 18766 / IAM 14443 / JCM 21226 / LMG 7866 / NBRC 102419 / NCTC 12128 / CDC 0568-73)).